Consider the following 104-residue polypeptide: L-rhamnose mutarotase (104 aa).

Tyr-18 contributes to the substrate binding site. His-22 (proton donor) is an active-site residue. Substrate is bound by residues Tyr-41 and 76-77 (WW).

This sequence belongs to the rhamnose mutarotase family. In terms of assembly, homodimer.

The protein resides in the cytoplasm. It catalyses the reaction alpha-L-rhamnose = beta-L-rhamnose. It functions in the pathway carbohydrate metabolism; L-rhamnose metabolism. In terms of biological role, involved in the anomeric conversion of L-rhamnose. The polypeptide is L-rhamnose mutarotase (Yersinia pseudotuberculosis serotype O:1b (strain IP 31758)).